A 710-amino-acid chain; its full sequence is Interferon-induced GTP-binding protein Mx2 (710 aa).

Positions 1-87 (MSLSFRPLKY…RSKGPENNLY (87 aa)) are disordered. Composition is skewed to polar residues over residues 39 to 50 (QTMSPPQWQVEE) and 58 to 79 (NNFS…QQRS). The region spanning 112-383 (DLALPAIAVI…LIWHINKSLP (272 aa)) is the Dynamin-type G domain. A G1 motif region spans residues 122-129 (GDQSSGKS). 122-129 (GDQSSGKS) serves as a coordination point for GTP. The interval 147 to 149 (ITR) is G2 motif. The segment at 221-224 (DLPG) is G3 motif. GTP is bound by residues 221–225 (DLPGI) and 290–293 (TKPD). The interval 290–293 (TKPD) is G4 motif. The G5 motif stretch occupies residues 322–325 (KCRG). The GED domain maps to 619-710 (IVEIGVHLNA…ALYEFPHFKG (92 aa)).

This sequence belongs to the TRAFAC class dynamin-like GTPase superfamily. Dynamin/Fzo/YdjA family.

It is found in the cytoplasm. The protein localises to the nucleus. Its function is as follows. Interferon-induced dynamin-like GTPase with antiviral activity against vesicular stomatitis virus (VSV). The polypeptide is Interferon-induced GTP-binding protein Mx2 (MX2) (Bubalus bubalis (Domestic water buffalo)).